A 396-amino-acid polypeptide reads, in one-letter code: Elongation factor Tu (396 aa).

One can recognise a tr-type G domain in the interval 10-206 (KPHVNVGTIG…VLDTYIPEPE (197 aa)). Residues 19 to 26 (GHVDHGKT) form a G1 region. Residue 19-26 (GHVDHGKT) participates in GTP binding. Threonine 26 contributes to the Mg(2+) binding site. The interval 60–64 (GITIN) is G2. Positions 81–84 (DCPG) are G3. Residues 81–85 (DCPGH) and 136–139 (NKCD) contribute to the GTP site. The segment at 136–139 (NKCD) is G4. Residues 174–176 (SAT) are G5.

Belongs to the TRAFAC class translation factor GTPase superfamily. Classic translation factor GTPase family. EF-Tu/EF-1A subfamily. As to quaternary structure, monomer.

It is found in the cytoplasm. The catalysed reaction is GTP + H2O = GDP + phosphate + H(+). In terms of biological role, GTP hydrolase that promotes the GTP-dependent binding of aminoacyl-tRNA to the A-site of ribosomes during protein biosynthesis. This chain is Elongation factor Tu, found in Psychrobacter arcticus (strain DSM 17307 / VKM B-2377 / 273-4).